A 428-amino-acid polypeptide reads, in one-letter code: Histidinol dehydrogenase (428 aa).

Positions 125, 186, and 209 each coordinate NAD(+). Substrate-binding residues include serine 232, glutamine 254, and histidine 257. Zn(2+)-binding residues include glutamine 254 and histidine 257. Active-site proton acceptor residues include glutamate 322 and histidine 323. Histidine 323, aspartate 356, glutamate 410, and histidine 415 together coordinate substrate. Aspartate 356 contacts Zn(2+). Zn(2+) is bound at residue histidine 415.

It belongs to the histidinol dehydrogenase family. It depends on Zn(2+) as a cofactor.

It catalyses the reaction L-histidinol + 2 NAD(+) + H2O = L-histidine + 2 NADH + 3 H(+). It participates in amino-acid biosynthesis; L-histidine biosynthesis; L-histidine from 5-phospho-alpha-D-ribose 1-diphosphate: step 9/9. Functionally, catalyzes the sequential NAD-dependent oxidations of L-histidinol to L-histidinaldehyde and then to L-histidine. The polypeptide is Histidinol dehydrogenase (Lactiplantibacillus plantarum (strain ATCC BAA-793 / NCIMB 8826 / WCFS1) (Lactobacillus plantarum)).